A 675-amino-acid chain; its full sequence is Genome polyprotein (675 aa).

Residues 92-216 enclose the RdRp catalytic domain; the sequence is WVYCDADGSQ…AIHPDHEHVL (125 aa). Residues 390-424 show a composition bias toward basic and acidic residues; it reads KNEAVDTGLNEKFKEKEKQKEKEKEKQKEKEKDDA. The disordered stretch occupies residues 390 to 447; the sequence is KNEAVDTGLNEKFKEKEKQKEKEKEKQKEKEKDDASDGNDVSTSTKTGERDRDVNVGT.

It belongs to the potyviridae genome polyprotein family. In terms of processing, genome polyprotein of potyviruses undergoes post-translational proteolytic processing by the main proteinase NIa-pro resulting in the production of at least ten individual proteins. The P1 proteinase and the HC-pro cleave only their respective C-termini autocatalytically. 6K1 is essential for proper proteolytic separation of P3 from CI.

The protein localises to the virion. The enzyme catalyses RNA(n) + a ribonucleoside 5'-triphosphate = RNA(n+1) + diphosphate. Functionally, an RNA-dependent RNA polymerase that plays an essential role in the virus replication. Its function is as follows. Involved in aphid transmission, cell-to-cell and systemis movement, encapsidation of the viral RNA and in the regulation of viral RNA amplification. This Papaya ringspot virus (strain W) protein is Genome polyprotein.